A 438-amino-acid chain; its full sequence is Na(+)/H(+) antiporter NhaA (438 aa).

11 consecutive transmembrane segments (helical) span residues 23-43 (FGGIFLFLNAVLAMVVANSFL), 62-82 (FFIGFSLHNWIDDVLMALFFL), 104-124 (SFPVIAAIGGMIAPGLIYFFL), 133-153 (GFGIPMATDIAFALGVIMLLG), 162-182 (VFLITLAVADDLGAIVVIALF), 185-205 (TNLKFAWLLGALGVVLVLAVL), 221-241 (VLLWFCVHQSGIHATIAAVIL), 302-322 (FLAPISGYFIMPLFAFANAGV), 337-357 (LGVILGLCLGKPLGIFLITFI), 372-392 (WWHILGAGLLAGIGFTMSMFI), and 410-430 (IAILLGSLISGIIGALYLFAL).

It belongs to the NhaA Na(+)/H(+) (TC 2.A.33) antiporter family.

Its subcellular location is the cell inner membrane. It catalyses the reaction Na(+)(in) + 2 H(+)(out) = Na(+)(out) + 2 H(+)(in). Na(+)/H(+) antiporter that extrudes sodium in exchange for external protons. The protein is Na(+)/H(+) antiporter NhaA of Helicobacter pylori (strain ATCC 700392 / 26695) (Campylobacter pylori).